The following is a 223-amino-acid chain: MTRRKLGRMKVRPPDPETAQRYLLRFTGRQLYHEAERLPGLSSPELFGDQRPLELDVGCGTGEYICHLARSDPEANFVGVDLHLKSLHKAIRRAEEANLQNIKFICADFRQMYPLLRPSALRAVYLHFPDPGIKPRYRKRRLFNERFLEEMHRAVVPGGRMSLVTDDEDYFRQMLELIERDGRWRRAHEEPYLTGFDPPVKSRFQKMWERRGRTIYRFELVRP.

Residues Asp-56, Asp-81, Asp-108, and Asp-130 each contribute to the S-adenosyl-L-methionine site. The active site involves Asp-130. Lys-134 and Asp-166 together coordinate substrate.

It belongs to the class I-like SAM-binding methyltransferase superfamily. TrmB family.

The enzyme catalyses guanosine(46) in tRNA + S-adenosyl-L-methionine = N(7)-methylguanosine(46) in tRNA + S-adenosyl-L-homocysteine. Its pathway is tRNA modification; N(7)-methylguanine-tRNA biosynthesis. In terms of biological role, catalyzes the formation of N(7)-methylguanine at position 46 (m7G46) in tRNA. The protein is tRNA (guanine-N(7)-)-methyltransferase of Rubrobacter xylanophilus (strain DSM 9941 / JCM 11954 / NBRC 16129 / PRD-1).